The sequence spans 119 residues: Large ribosomal subunit protein bL20c (119 aa).

The protein belongs to the bacterial ribosomal protein bL20 family.

The protein resides in the plastid. It is found in the chloroplast. Its function is as follows. Binds directly to 23S ribosomal RNA and is necessary for the in vitro assembly process of the 50S ribosomal subunit. It is not involved in the protein synthesizing functions of that subunit. This chain is Large ribosomal subunit protein bL20c, found in Amborella trichopoda.